Here is a 264-residue protein sequence, read N- to C-terminus: ATP synthase subunit a (264 aa).

Transmembrane regions (helical) follow at residues 29–49 (TWHI…LWIF), 90–110 (IAPL…MDMI), 134–154 (DVNI…FYSI), 177–197 (IPVN…SLAL), 208–228 (LIFI…TLGV), and 235–255 (LIFH…LTIV).

Belongs to the ATPase A chain family. F-type ATPases have 2 components, CF(1) - the catalytic core - and CF(0) - the membrane proton channel. CF(1) has five subunits: alpha(3), beta(3), gamma(1), delta(1), epsilon(1). CF(0) has three main subunits: a(1), b(2) and c(9-12). The alpha and beta chains form an alternating ring which encloses part of the gamma chain. CF(1) is attached to CF(0) by a central stalk formed by the gamma and epsilon chains, while a peripheral stalk is formed by the delta and b chains.

The protein resides in the cell inner membrane. In terms of biological role, key component of the proton channel; it plays a direct role in the translocation of protons across the membrane. The chain is ATP synthase subunit a from Shewanella baltica (strain OS223).